The chain runs to 283 residues: Thymidylate synthase (283 aa).

Arginine 22 provides a ligand contact to dUMP. Residue cysteine 160 is the Nucleophile of the active site. DUMP is bound by residues 180 to 183, asparagine 191, and 221 to 223; these read RSCD and HIY. Residue aspartate 183 participates in (6R)-5,10-methylene-5,6,7,8-tetrahydrofolate binding. Serine 282 contributes to the (6R)-5,10-methylene-5,6,7,8-tetrahydrofolate binding site.

It belongs to the thymidylate synthase family. Bacterial-type ThyA subfamily. As to quaternary structure, homodimer.

Its subcellular location is the cytoplasm. It catalyses the reaction dUMP + (6R)-5,10-methylene-5,6,7,8-tetrahydrofolate = 7,8-dihydrofolate + dTMP. The protein operates within pyrimidine metabolism; dTTP biosynthesis. Its function is as follows. Catalyzes the reductive methylation of 2'-deoxyuridine-5'-monophosphate (dUMP) to 2'-deoxythymidine-5'-monophosphate (dTMP) while utilizing 5,10-methylenetetrahydrofolate (mTHF) as the methyl donor and reductant in the reaction, yielding dihydrofolate (DHF) as a by-product. This enzymatic reaction provides an intracellular de novo source of dTMP, an essential precursor for DNA biosynthesis. This Shewanella loihica (strain ATCC BAA-1088 / PV-4) protein is Thymidylate synthase.